The sequence spans 137 residues: Oleosin Ara h 11.0101 (137 aa).

Residue Ala2 is modified to N-acetylalanine; alternate. 2 helical membrane-spanning segments follow: residues 27 to 47 (AVVA…GTVI) and 55 to 75 (LFVI…LLGL).

It belongs to the oleosin family. As to expression, expressed in seeds (at protein level).

It is found in the lipid droplet. The protein localises to the membrane. Functionally, may have a structural role to stabilize the lipid body during desiccation of the seed by preventing coalescence of the oil. Probably interacts with both lipid and phospholipid moieties of lipid bodies. May also provide recognition signals for specific lipase anchorage in lipolysis during seedling growth. The sequence is that of Oleosin Ara h 11.0101 from Arachis hypogaea (Peanut).